We begin with the raw amino-acid sequence, 329 residues long: MQHLNELVEKAKLAIESIQDKSLTALDEIRVEYFGKKGYFTQLMQELRNVSAEERPAMGAKINEAKQAALEFLNAKKTEWEQAELNAKLEKERVDVSLPGRKVETGGLHPVTMTINRVTKFFSELGFSVENGPEIESDYYNFDALNIPKHHPARADHDTFWFNPELLLRTQTSGVQIRTMEKMQPPIRIMAPGRVYRNDYDQTHTPMFHQIELLYVDKKANFTELKGLLHDFLRAFFEEDLQVRFRPSYFPFTEPSAEVDVMGKNGKWLEVLGCGMVHPNVLRNVGIDPNEYSGFAVGMGVERLTMLRYNVTDLRSFFENDLRFLKQFK.

Mg(2+) is bound at residue glutamate 254.

This sequence belongs to the class-II aminoacyl-tRNA synthetase family. Phe-tRNA synthetase alpha subunit type 1 subfamily. Tetramer of two alpha and two beta subunits. The cofactor is Mg(2+).

The protein localises to the cytoplasm. The catalysed reaction is tRNA(Phe) + L-phenylalanine + ATP = L-phenylalanyl-tRNA(Phe) + AMP + diphosphate + H(+). The chain is Phenylalanine--tRNA ligase alpha subunit from Haemophilus influenzae (strain 86-028NP).